The chain runs to 462 residues: A-type ATP synthase subunit B (462 aa).

The protein belongs to the ATPase alpha/beta chains family. As to quaternary structure, has multiple subunits with at least A(3), B(3), C, D, E, F, H, I and proteolipid K(x).

Its subcellular location is the cell membrane. In terms of biological role, component of the A-type ATP synthase that produces ATP from ADP in the presence of a proton gradient across the membrane. The B chain is a regulatory subunit. This chain is A-type ATP synthase subunit B, found in Methanobrevibacter smithii (strain ATCC 35061 / DSM 861 / OCM 144 / PS).